The following is a 758-amino-acid chain: 5-methyltetrahydropteroyltriglutamate--homocysteine methyltransferase (758 aa).

Residues 17–20 and Lys117 each bind 5-methyltetrahydropteroyltri-L-glutamate; that span reads RELK. L-homocysteine is bound by residues 434–436 and Glu487; that span reads IGS. Residues 434–436 and Glu487 each bind L-methionine; that span reads IGS. Residues 518–519 and Trp564 each bind 5-methyltetrahydropteroyltri-L-glutamate; that span reads RC. Position 602 (Asp602) interacts with L-homocysteine. Asp602 contacts L-methionine. A 5-methyltetrahydropteroyltri-L-glutamate-binding site is contributed by Glu608. Residues His644, Cys646, and Glu668 each coordinate Zn(2+). His697 functions as the Proton donor in the catalytic mechanism. Cys729 lines the Zn(2+) pocket.

It belongs to the vitamin-B12 independent methionine synthase family. The cofactor is Zn(2+).

It carries out the reaction 5-methyltetrahydropteroyltri-L-glutamate + L-homocysteine = tetrahydropteroyltri-L-glutamate + L-methionine. The protein operates within amino-acid biosynthesis; L-methionine biosynthesis via de novo pathway; L-methionine from L-homocysteine (MetE route): step 1/1. Functionally, catalyzes the transfer of a methyl group from 5-methyltetrahydrofolate to homocysteine resulting in methionine formation. The sequence is that of 5-methyltetrahydropteroyltriglutamate--homocysteine methyltransferase from Yersinia pseudotuberculosis serotype O:1b (strain IP 31758).